The chain runs to 98 residues: MKLMVLVFTIGLTLLLGVQAMPANRLSCYRKILKDHNCHNLPEGVADLTQIDVNVQDHFWDGKGCEMICYCNFSELLCCPKDVFFGPKISFVIPCNNQ.

The N-terminal stretch at 1-20 (MKLMVLVFTIGLTLLLGVQA) is a signal peptide. Asparagine 72 carries N-linked (GlcNAc...) asparagine glycosylation.

The protein belongs to the SCRG1 family. Expressed abundantly in the central nervous system of adult, but not at all in fetal brain. High levels of SCRG1 transcripts are also observed in testis and aorta.

Its subcellular location is the secreted. In Homo sapiens (Human), this protein is Scrapie-responsive protein 1 (SCRG1).